We begin with the raw amino-acid sequence, 255 residues long: Uridylate kinase (255 aa).

The interval 1–21 (MSAAAAGRGERLNHAGNPGHR) is disordered. Residue 30–33 (KLGG) participates in ATP binding. G71 lines the UMP pocket. Residues G72 and R76 each contribute to the ATP site. UMP contacts are provided by residues D91 and 152–159 (MGLPYFST). The ATP site is built by F185 and D188.

The protein belongs to the UMP kinase family. Homohexamer.

Its subcellular location is the cytoplasm. It catalyses the reaction UMP + ATP = UDP + ADP. The protein operates within pyrimidine metabolism; CTP biosynthesis via de novo pathway; UDP from UMP (UMPK route): step 1/1. Its activity is regulated as follows. Inhibited by UTP. Its function is as follows. Catalyzes the reversible phosphorylation of UMP to UDP. The polypeptide is Uridylate kinase (Mycobacterium leprae (strain TN)).